The primary structure comprises 105 residues: MNLGVSMLRILFLLDVGGAQVLATGKTPGAEIDFKYALIGTAVGVAISAGFLALKICMIRRHLFDDDSSDLKSTPGGLSDTIPLKKRAPRRNHNFSKRDAQVIEL.

The first 19 residues, 1–19, serve as a signal peptide directing secretion; sequence MNLGVSMLRILFLLDVGGA. The Extracellular segment spans residues 20-38; that stretch reads QVLATGKTPGAEIDFKYAL. A helical transmembrane segment spans residues 39-59; sequence IGTAVGVAISAGFLALKICMI. At 60-105 the chain is on the cytoplasmic side; it reads RRHLFDDDSSDLKSTPGGLSDTIPLKKRAPRRNHNFSKRDAQVIEL.

Its subcellular location is the membrane. In Homo sapiens (Human), this protein is Transmembrane protein 273.